Here is a 314-residue protein sequence, read N- to C-terminus: DNA oxidative demethylase ALKBH2 (314 aa).

The segment covering 1–28 (MTNPLNSTAANRSNQPSSDGISDGQITN) has biased composition (polar residues). Residues 1-75 (MTNPLNSTAA…KRFHYHQDQR (75 aa)) form a disordered region. The span at 57-75 (NGKDDSDTKKRFHYHQDQR) shows a compositional bias: basic and acidic residues. Substrate contacts are provided by residues Trp132 and 160–163 (ALVY). A Fe2OG dioxygenase domain is found at 194–314 (RFNSLLLNRY…RINLTFRLVL (121 aa)). 201-203 (NRY) contributes to the 2-oxoglutarate binding site. 2 residues coordinate Fe cation: His213 and Asp215. Asp216 provides a ligand contact to substrate. The disordered stretch occupies residues 242–271 (KKDEESSQGKTGDSGPAKKRLKRSSREDQQ). A Fe cation-binding site is contributed by His293. 2-oxoglutarate-binding positions include Arg305 and 305–311 (RINLTFR).

It belongs to the alkB family. Requires Fe(2+) as cofactor. Expressed ubiquitously, including in seedlings, leaves and flowers.

The protein resides in the nucleus. It carries out the reaction a methylated nucleobase within DNA + 2-oxoglutarate + O2 = a nucleobase within DNA + formaldehyde + succinate + CO2. Functionally, dioxygenase that repairs alkylated DNA containing 1-methyladenine and 1-ethenoadenine by oxidative demethylation. Accepts double-stranded and single-stranded substrates, with a preference for dsDNA over ssDNA. Confers resistance to methylating agents such as methylmethanesulphonate (MMS). The chain is DNA oxidative demethylase ALKBH2 (ALKBH2) from Arabidopsis thaliana (Mouse-ear cress).